Reading from the N-terminus, the 285-residue chain is Probable endonuclease 4 (285 aa).

9 residues coordinate Zn(2+): His-69, His-109, Glu-145, Asp-179, His-182, His-216, Asp-229, His-231, and Glu-261.

This sequence belongs to the AP endonuclease 2 family. Zn(2+) is required as a cofactor.

The enzyme catalyses Endonucleolytic cleavage to 5'-phosphooligonucleotide end-products.. Its function is as follows. Endonuclease IV plays a role in DNA repair. It cleaves phosphodiester bonds at apurinic or apyrimidinic (AP) sites, generating a 3'-hydroxyl group and a 5'-terminal sugar phosphate. The polypeptide is Probable endonuclease 4 (Salmonella paratyphi C (strain RKS4594)).